Here is a 788-residue protein sequence, read N- to C-terminus: uncharacterized protein (788 aa).

The Adrift-type SAM-dependent 2'-O-MTase domain maps to 485–693 (EMITTAWIKL…IYIVLKSYKG (209 aa)). Glycine 521 and aspartate 604 together coordinate S-adenosyl-L-methionine. The active-site Proton acceptor is the lysine 645.

This is an uncharacterized protein from Acanthamoeba polyphaga (Amoeba).